The primary structure comprises 394 residues: MPMIETRTDRMLLNFGPHHPSMHGVLRLLVTLDGENIVDCEPVIGYLHRGMEKIAENRTVVQYLPYVSRWDYGAGMFNEAITVNAVEKLAGIPVPRRASYLRVIMLELTRITNHLLWFGPFLADLGAQTPFLYAMREREWILDLFEAVTGMRLINNNYFRVGGVAVDLPYGWTEKCLDFCEYFLPKVDEYERLVTDNPIFRRRLEGIGVISKQDAINWGLSGPMLRACGVNWDLRKVDHYECYDDFDWEVAVYPEGDCLARYRVRMKEMRESCKIVQQAVKALPGGPFENLEAKRMLEGPKSEWNKGDYQFISKKPSANFKIPKGEAYVRVESAKGELGIYIVGDDNVCPWRWKIRPPGFVNLQVLPQLIRGMKVADMIAILGSIDIIMGEVDR.

The protein belongs to the complex I 49 kDa subunit family. NDH-1 can be composed of about 15 different subunits; different subcomplexes with different compositions have been identified which probably have different functions.

The protein resides in the cellular thylakoid membrane. The enzyme catalyses a plastoquinone + NADH + (n+1) H(+)(in) = a plastoquinol + NAD(+) + n H(+)(out). The catalysed reaction is a plastoquinone + NADPH + (n+1) H(+)(in) = a plastoquinol + NADP(+) + n H(+)(out). In terms of biological role, NDH-1 shuttles electrons from an unknown electron donor, via FMN and iron-sulfur (Fe-S) centers, to quinones in the respiratory and/or the photosynthetic chain. The immediate electron acceptor for the enzyme in this species is believed to be plastoquinone. Couples the redox reaction to proton translocation, and thus conserves the redox energy in a proton gradient. Cyanobacterial NDH-1 also plays a role in inorganic carbon-concentration. This chain is NAD(P)H-quinone oxidoreductase subunit H, found in Synechococcus sp. (strain JA-3-3Ab) (Cyanobacteria bacterium Yellowstone A-Prime).